Consider the following 241-residue polypeptide: MAVWGPGGRLGLRGCLGARKLLCPRFQSRGPQGVEDGDRPQPSSKTPKVPKIYTKTGDKGFSSTFTGERRSKDDQVFEAVGTTDELSSAIGFAMELIAEKGHPFVEELQKIQCSLQDVGSALATPRSSAREAHLKHATFEAGPILELEQWIDKYSRQLPPLTAFILPSGGKSSSALHFCRAVCRRAERRVVPLVQTGETDANVVKFLNRLSDYLFTLARYTAMKEGNPEKIYKKNDLSDRT.

The transit peptide at 1 to 26 (MAVWGPGGRLGLRGCLGARKLLCPRF) directs the protein to the mitochondrion. The disordered stretch occupies residues 27–69 (QSRGPQGVEDGDRPQPSSKTPKVPKIYTKTGDKGFSSTFTGER). ATP contacts are provided by residues 54–63 (TKTGDKGFSS) and lysine 72. Serine 128 bears the Phosphoserine mark. Residue 184-188 (RRAER) participates in ATP binding. Residue lysine 205 is modified to N6-succinyllysine. ATP is bound at residue asparagine 208. An N6-acetyllysine; alternate modification is found at lysine 224. Position 224 is an N6-succinyllysine; alternate (lysine 224).

It belongs to the Cob(I)alamin adenosyltransferase family. In terms of assembly, homotrimer.

It is found in the mitochondrion. It catalyses the reaction cob(I)alamin-[corrinoid adenosyltransferase] + ATP = apo-[corrinoid adenosyltransferase] + adenosylcob(III)alamin + triphosphate. Converts cob(I)alamin to adenosylcobalamin (adenosylcob(III)alamin), a coenzyme for methylmalonyl-CoA mutase, therefore participates in the final step of the vitamin B12 conversion. Generates adenosylcobalamin (AdoCbl) and directly delivers the cofactor to MUT in a transfer that is stimulated by ATP-binding to MMAB and gated by MMAA. The sequence is that of Corrinoid adenosyltransferase MMAB from Bos taurus (Bovine).